The primary structure comprises 374 residues: Agmatine deiminase (374 aa).

Asp220 and Asp226 together coordinate agmatine. Cys366 serves as the catalytic Amidino-cysteine intermediate.

It belongs to the agmatine deiminase family. Forms homodimers.

It carries out the reaction agmatine + H2O = N-carbamoylputrescine + NH4(+). The protein operates within amine and polyamine biosynthesis; putrescine biosynthesis via agmatine pathway; N-carbamoylputrescine from agmatine: step 1/1. Mediates the hydrolysis of agmatine into N-carbamoylputrescine in the arginine decarboxylase (ADC) pathway of putrescine biosynthesis, a basic polyamine. The protein is Agmatine deiminase of Medicago truncatula (Barrel medic).